Here is a 401-residue protein sequence, read N- to C-terminus: Enoyl-[acyl-carrier-protein] reductase [NADH] (401 aa).

NAD(+)-binding positions include 48–53 (GASSGY), 74–75 (FE), 111–112 (DA), and 140–141 (LA). Tyr-226 contributes to the substrate binding site. The Proton donor role is filled by Tyr-236. NAD(+) is bound by residues Lys-245 and 274–276 (VVT).

The protein belongs to the TER reductase family. Monomer.

The enzyme catalyses a 2,3-saturated acyl-[ACP] + NAD(+) = a (2E)-enoyl-[ACP] + NADH + H(+). The protein operates within lipid metabolism; fatty acid biosynthesis. Functionally, involved in the final reduction of the elongation cycle of fatty acid synthesis (FAS II). Catalyzes the reduction of a carbon-carbon double bond in an enoyl moiety that is covalently linked to an acyl carrier protein (ACP). The chain is Enoyl-[acyl-carrier-protein] reductase [NADH] from Xylella fastidiosa (strain 9a5c).